The sequence spans 161 residues: Large ribosomal subunit protein uL15 (161 aa).

Residues 1-43 form a disordered region; that stretch reads MKLSDIADNAGSRKKRMRIGRGIGSGKGKTGGRGGKGQTARSG. The segment covering 21-37 has biased composition (gly residues); sequence RGIGSGKGKTGGRGGKG.

The protein belongs to the universal ribosomal protein uL15 family. As to quaternary structure, part of the 50S ribosomal subunit.

Its function is as follows. Binds to the 23S rRNA. The chain is Large ribosomal subunit protein uL15 from Nitrobacter hamburgensis (strain DSM 10229 / NCIMB 13809 / X14).